A 228-amino-acid chain; its full sequence is Sec-independent protein translocase protein TatB (228 aa).

The chain crosses the membrane as a helical span at residues 1-21 (MFDFGLGELVFVGIIALIVLG). 2 disordered regions span residues 126-162 (LSDGISDVMPSERSDTSAEILGDSGQTGSTAEPAETD) and 196-228 (VPHTTSLRKQAISRKRGLRPKHRAKPKLRVRKS). A compositionally biased stretch (basic residues) spans 206-228 (AISRKRGLRPKHRAKPKLRVRKS).

It belongs to the TatB family. The Tat system comprises two distinct complexes: a TatABC complex, containing multiple copies of TatA, TatB and TatC subunits, and a separate TatA complex, containing only TatA subunits. Substrates initially bind to the TatABC complex, which probably triggers association of the separate TatA complex to form the active translocon.

It is found in the cell inner membrane. In terms of biological role, part of the twin-arginine translocation (Tat) system that transports large folded proteins containing a characteristic twin-arginine motif in their signal peptide across membranes. Together with TatC, TatB is part of a receptor directly interacting with Tat signal peptides. TatB may form an oligomeric binding site that transiently accommodates folded Tat precursor proteins before their translocation. The chain is Sec-independent protein translocase protein TatB from Neisseria meningitidis serogroup C / serotype 2a (strain ATCC 700532 / DSM 15464 / FAM18).